The following is a 151-amino-acid chain: Ubiquitin-like protein 4A-B (151 aa).

Residues 1–76 (MILTIKPLQG…LNLVVRPAGE (76 aa)) form the Ubiquitin-like domain.

In terms of assembly, component of the BAT3 complex.

It is found in the cytoplasm. Its subcellular location is the cytosol. Its function is as follows. Component of the BAT3 complex, a multiprotein complex involved in the post-translational delivery of tail-anchored (TA) membrane proteins to the endoplasmic reticulum membrane. TA membrane proteins, also named type II transmembrane proteins, contain a single C-terminal transmembrane region. This is Ubiquitin-like protein 4A-B (ubl4ab) from Salmo salar (Atlantic salmon).